A 200-amino-acid chain; its full sequence is Protein GrpE (200 aa).

Positions 1–11 (MSNQTNKAQDN) are enriched in polar residues. Residues 1 to 29 (MSNQTNKAQDNQVEEIVEGELLNENGTEA) form a disordered region.

It belongs to the GrpE family. Homodimer.

It localises to the cytoplasm. Functionally, participates actively in the response to hyperosmotic and heat shock by preventing the aggregation of stress-denatured proteins, in association with DnaK and GrpE. It is the nucleotide exchange factor for DnaK and may function as a thermosensor. Unfolded proteins bind initially to DnaJ; upon interaction with the DnaJ-bound protein, DnaK hydrolyzes its bound ATP, resulting in the formation of a stable complex. GrpE releases ADP from DnaK; ATP binding to DnaK triggers the release of the substrate protein, thus completing the reaction cycle. Several rounds of ATP-dependent interactions between DnaJ, DnaK and GrpE are required for fully efficient folding. The chain is Protein GrpE from Shewanella halifaxensis (strain HAW-EB4).